The primary structure comprises 194 residues: uncharacterized protein (194 aa).

The first 22 residues, 1–22, serve as a signal peptide directing secretion; that stretch reads MNKVTKTAIAGLLALFAGNAAA. A disulfide bond links Cys38 and Cys78.

The protein belongs to the fimbrial protein family.

The protein localises to the fimbrium. In terms of biological role, part of the yraHIJK fimbrial operon. Could contribute to adhesion to various surfaces in specific environmental niches. Increases adhesion to eukaryotic T24 bladder epithelial cells in the absence of fim operon. This is an uncharacterized protein from Escherichia coli (strain K12).